A 526-amino-acid polypeptide reads, in one-letter code: Triacylglycerol lipase OBL1 (526 aa).

A helical membrane pass occupies residues 79-99; sequence GHLTDFLLNFYYQNHGFLGIL. A GXSXG motif is present at residues 338 to 342; the sequence is GHSLG. S340 (nucleophile) is an active-site residue. Catalysis depends on charge relay system residues D404 and H497.

Belongs to the AB hydrolase superfamily. Lipase family.

The protein localises to the membrane. The catalysed reaction is a triacylglycerol + H2O = a diacylglycerol + a fatty acid + H(+). In terms of biological role, acid lipase that can hydrolyze a range of triacylglycerols but is not active on phospholipids. In vitro, hydrolyzes triolein, trilinolein, triricinolein, tripalmitin, trilaurin and tricaprin. May play a role in the regulation of lipolysis in germinating seeds. The protein is Triacylglycerol lipase OBL1 of Ricinus communis (Castor bean).